The sequence spans 102 residues: CRISPR-associated endoribonuclease Cas2 1 (102 aa).

Aspartate 17 is a binding site for Mg(2+).

This sequence belongs to the CRISPR-associated endoribonuclease Cas2 protein family. As to quaternary structure, homodimer, forms a heterotetramer with a Cas1 homodimer. Mg(2+) serves as cofactor.

In terms of biological role, CRISPR (clustered regularly interspaced short palindromic repeat), is an adaptive immune system that provides protection against mobile genetic elements (viruses, transposable elements and conjugative plasmids). CRISPR clusters contain sequences complementary to antecedent mobile elements and target invading nucleic acids. CRISPR clusters are transcribed and processed into CRISPR RNA (crRNA). Functions as a ssRNA-specific endoribonuclease. Involved in the integration of spacer DNA into the CRISPR cassette. This is CRISPR-associated endoribonuclease Cas2 1 from Rhodospirillum rubrum (strain ATCC 11170 / ATH 1.1.1 / DSM 467 / LMG 4362 / NCIMB 8255 / S1).